We begin with the raw amino-acid sequence, 326 residues long: Protein FAM50 homolog (326 aa).

The segment at 77-111 (ISNRDLQVARGDQSSSTQSKDSQEAREKEEHVAKH) is disordered. The segment covering 97-109 (DSQEAREKEEHVA) has biased composition (basic and acidic residues).

This sequence belongs to the FAM50 family.

The polypeptide is Protein FAM50 homolog (Caenorhabditis elegans).